We begin with the raw amino-acid sequence, 206 residues long: Glycerol-3-phosphate acyltransferase (206 aa).

6 helical membrane passes run 6-26 (IFLA…PSGF), 57-77 (KAAL…ILIA), 86-106 (FHVI…WLNW), 118-138 (VFLG…MAVL), 143-163 (IVSL…FLSL), and 165-185 (EASF…MVLW).

Belongs to the PlsY family. Probably interacts with PlsX.

It localises to the cell inner membrane. The enzyme catalyses an acyl phosphate + sn-glycerol 3-phosphate = a 1-acyl-sn-glycero-3-phosphate + phosphate. Its pathway is lipid metabolism; phospholipid metabolism. Functionally, catalyzes the transfer of an acyl group from acyl-phosphate (acyl-PO(4)) to glycerol-3-phosphate (G3P) to form lysophosphatidic acid (LPA). This enzyme utilizes acyl-phosphate as fatty acyl donor, but not acyl-CoA or acyl-ACP. This Prochlorococcus marinus (strain MIT 9211) protein is Glycerol-3-phosphate acyltransferase.